The sequence spans 131 residues: Arsenate reductase 2 (131 aa).

Catalysis depends on nucleophile residues C10, C82, and C89. Disulfide bonds link C10-C82 and C82-C89.

It belongs to the low molecular weight phosphotyrosine protein phosphatase family. Thioredoxin-coupled ArsC subfamily.

The protein localises to the cytoplasm. It catalyses the reaction arsenate + [thioredoxin]-dithiol + H(+) = arsenite + [thioredoxin]-disulfide + H2O. In terms of biological role, catalyzes the reduction of arsenate [As(V)] to arsenite [As(III)]. This chain is Arsenate reductase 2, found in Staphylococcus haemolyticus (strain JCSC1435).